The chain runs to 215 residues: Phosphoribosylglycinamide formyltransferase (215 aa).

(6R)-10-formyltetrahydrofolate is bound by residues Arg-74, 99 to 102, and Asn-116; that span reads MRIL. The active-site Proton donor is the His-118.

The protein belongs to the GART family.

It catalyses the reaction N(1)-(5-phospho-beta-D-ribosyl)glycinamide + (6R)-10-formyltetrahydrofolate = N(2)-formyl-N(1)-(5-phospho-beta-D-ribosyl)glycinamide + (6S)-5,6,7,8-tetrahydrofolate + H(+). It participates in purine metabolism; IMP biosynthesis via de novo pathway; N(2)-formyl-N(1)-(5-phospho-D-ribosyl)glycinamide from N(1)-(5-phospho-D-ribosyl)glycinamide (10-formyl THF route): step 1/1. In terms of biological role, catalyzes the transfer of a formyl group from 10-formyltetrahydrofolate to 5-phospho-ribosyl-glycinamide (GAR), producing 5-phospho-ribosyl-N-formylglycinamide (FGAR) and tetrahydrofolate. The chain is Phosphoribosylglycinamide formyltransferase from Mycobacterium tuberculosis (strain CDC 1551 / Oshkosh).